Here is a 442-residue protein sequence, read N- to C-terminus: Methionine aminopeptidase 2 (442 aa).

Residues 1–81 (MAAQAPTEAL…APTAQSDPPR (81 aa)) are disordered. The span at 56–72 (PLRRRRRRRRTRKKKKA) shows a compositional bias: basic residues. His-196 is a binding site for substrate. A divalent metal cation-binding residues include Asp-216, Asp-227, and His-296. Position 304 (His-304) interacts with substrate. Positions 329 and 423 each coordinate a divalent metal cation.

Belongs to the peptidase M24A family. Methionine aminopeptidase eukaryotic type 2 subfamily. It depends on Co(2+) as a cofactor. Requires Zn(2+) as cofactor. Mn(2+) serves as cofactor. Fe(2+) is required as a cofactor.

The protein resides in the cytoplasm. The catalysed reaction is Release of N-terminal amino acids, preferentially methionine, from peptides and arylamides.. Its function is as follows. Cotranslationally removes the N-terminal methionine from nascent proteins. The N-terminal methionine is often cleaved when the second residue in the primary sequence is small and uncharged (Met-Ala-, Cys, Gly, Pro, Ser, Thr, or Val). This is Methionine aminopeptidase 2 from Verticillium alfalfae (strain VaMs.102 / ATCC MYA-4576 / FGSC 10136) (Verticillium wilt of alfalfa).